Here is a 228-residue protein sequence, read N- to C-terminus: Max-interacting protein 1 (228 aa).

Disordered stretches follow at residues 30–76 and 160–228; these read YASS…NELE and SIGS…SFAS. Residues 43-56 are compositionally biased toward basic residues; sequence QHSKPPRRLSRAQK. A compositionally biased stretch (polar residues) spans 57–70; it reads HSSGSSNTSTANRS. Residues 67 to 119 form the bHLH domain; the sequence is ANRSTHNELEKNRRAHLRLCLERLKVLIPLGPDCTRHTTLGLLNKAKAHIKKL. Positions 173–183 are enriched in acidic residues; that stretch reads EREEIEVDVES. The segment covering 207–228 has biased composition (polar residues); the sequence is SLQSVGSDEGYSSASVKLSFAS.

As to quaternary structure, efficient DNA binding requires dimerization with another bHLH protein. Binds DNA as a heterodimer with MAX. Interacts with SMC3. Interacts with RNF17.

It localises to the nucleus. Functionally, transcriptional repressor. MXI1 binds with MAX to form a sequence-specific DNA-binding protein complex which recognizes the core sequence 5'-CAC[GA]TG-3'. MXI1 thus antagonizes MYC transcriptional activity by competing for MAX. Isoform Short, which lacks a segment, has a much stronger suppressive potential and associates with a SIN3 homologous protein. The chain is Max-interacting protein 1 (Mxi1) from Mus musculus (Mouse).